We begin with the raw amino-acid sequence, 198 residues long: DNA damage response protein D (198 aa).

The tract at residues 124 to 198 is disordered; it reads SAAPTDPAGP…SEAGENTPAA (75 aa). Residues 136–180 show a composition bias toward basic and acidic residues; the sequence is PGTDRAERTAAERTASERATHDRASTERPARPRRSAEPEAVRTED.

Its function is as follows. Appears to contribute to D.radiodurans capacity to survive exposure to ionizing radiation. May play a role in DNA repair and genome reconstitution. The chain is DNA damage response protein D (ddrD) from Deinococcus radiodurans (strain ATCC 13939 / DSM 20539 / JCM 16871 / CCUG 27074 / LMG 4051 / NBRC 15346 / NCIMB 9279 / VKM B-1422 / R1).